Reading from the N-terminus, the 201-residue chain is MKEFKAVFPKALIIFIIFTILCGGIYTIFITGISQLIFPKQANGSIIEVNGKKYGSVLLAQQYNDEKHLWGRIMNIDTNTFVDENGKKLAYSAPSNLSPASKEYEALVQERVDKIKENHPEQDEQAIPVDLVTCSGSGLDPHISVAAAKYQINRIAKNNNMEVKDVENIIDKYTSGKLFGVLGEKTVNVLEVNLAIDGILK.

Residues 13-33 traverse the membrane as a helical segment; it reads IIFIIFTILCGGIYTIFITGI.

The protein belongs to the KdpC family. As to quaternary structure, the system is composed of three essential subunits: KdpA, KdpB and KdpC.

It localises to the cell membrane. Its function is as follows. Part of the high-affinity ATP-driven potassium transport (or Kdp) system, which catalyzes the hydrolysis of ATP coupled with the electrogenic transport of potassium into the cytoplasm. This subunit acts as a catalytic chaperone that increases the ATP-binding affinity of the ATP-hydrolyzing subunit KdpB by the formation of a transient KdpB/KdpC/ATP ternary complex. The polypeptide is Potassium-transporting ATPase KdpC subunit (Clostridium botulinum (strain Alaska E43 / Type E3)).